The sequence spans 398 residues: Acetate kinase (398 aa).

Asn-7 contributes to the Mg(2+) binding site. Lys-14 contributes to the ATP binding site. Arg-91 is a substrate binding site. Asp-148 functions as the Proton donor/acceptor in the catalytic mechanism. ATP-binding positions include 208-212 (HIGNG), 283-285 (DMR), and 331-335 (GVGEN). Glu-384 is a binding site for Mg(2+).

Belongs to the acetokinase family. As to quaternary structure, homodimer. Mg(2+) serves as cofactor. The cofactor is Mn(2+).

The protein resides in the cytoplasm. The catalysed reaction is acetate + ATP = acetyl phosphate + ADP. The protein operates within metabolic intermediate biosynthesis; acetyl-CoA biosynthesis; acetyl-CoA from acetate: step 1/2. Functionally, catalyzes the formation of acetyl phosphate from acetate and ATP. Can also catalyze the reverse reaction. The chain is Acetate kinase from Phocaeicola vulgatus (strain ATCC 8482 / DSM 1447 / JCM 5826 / CCUG 4940 / NBRC 14291 / NCTC 11154) (Bacteroides vulgatus).